Consider the following 200-residue polypeptide: dITP/XTP pyrophosphatase (200 aa).

8 to 13 (TGNQGK) contacts substrate. The active-site Proton acceptor is the aspartate 69. Position 69 (aspartate 69) interacts with Mg(2+). Residues serine 70, 154 to 157 (FGYD), lysine 177, and 182 to 183 (HR) each bind substrate.

Belongs to the HAM1 NTPase family. Homodimer. Requires Mg(2+) as cofactor.

It catalyses the reaction XTP + H2O = XMP + diphosphate + H(+). It carries out the reaction dITP + H2O = dIMP + diphosphate + H(+). The enzyme catalyses ITP + H2O = IMP + diphosphate + H(+). Pyrophosphatase that catalyzes the hydrolysis of nucleoside triphosphates to their monophosphate derivatives, with a high preference for the non-canonical purine nucleotides XTP (xanthosine triphosphate), dITP (deoxyinosine triphosphate) and ITP. Seems to function as a house-cleaning enzyme that removes non-canonical purine nucleotides from the nucleotide pool, thus preventing their incorporation into DNA/RNA and avoiding chromosomal lesions. The polypeptide is dITP/XTP pyrophosphatase (Vibrio vulnificus (strain CMCP6)).